We begin with the raw amino-acid sequence, 1058 residues long: Ubiquitin-like modifier-activating enzyme 1 Y (1058 aa).

Residues 1 to 22 are disordered; it reads MSSSVLSKKRKVSGPDSSLDSS. ATP-binding positions include A477, D503, R514, K527, and 575–576; that span reads DN. Catalysis depends on C631, which acts as the Glycyl thioester intermediate.

The protein belongs to the ubiquitin-activating E1 family. As to quaternary structure, monomer. As to expression, expressed in testis in A spermatogonia and spermatids but not (or at very low levels) in pachytene spermatocytes. Also expressed in Y-bearing ovaries and at very low levels in adrenal gland.

It carries out the reaction ATP + ubiquitin + [E1 ubiquitin-activating enzyme]-L-cysteine = AMP + diphosphate + S-ubiquitinyl-[E1 ubiquitin-activating enzyme]-L-cysteine.. The protein operates within protein modification; protein ubiquitination. In terms of biological role, activates ubiquitin by first adenylating its C-terminal glycine residue with ATP, and thereafter linking this residue to the side chain of a cysteine residue in E1, yielding a ubiquitin-E1 thioester and free AMP. The Y chromosome form could be involved in the survival and proliferation of differentiating spermatogonia. This chain is Ubiquitin-like modifier-activating enzyme 1 Y (Uba1y), found in Mus musculus (Mouse).